The chain runs to 408 residues: Photox toxin (408 aa).

The disordered stretch occupies residues 168 to 196; sequence NNQQHIKDSDGRKPVNNMPPPPPPPMADK. A compositionally biased stretch (pro residues) spans 184–193; it reads NMPPPPPPPM. The TR mART core domain occupies 190-393; that stretch reads PPPMADKTQK…LRLTDDASAD (204 aa). Active-site residues include arginine 288, serine 318, and glutamate 355.

It in the C-terminal section; belongs to the SpvB family.

The enzyme catalyses L-arginyl-[protein] + NAD(+) = N(omega)-(ADP-D-ribosyl)-L-arginyl-[protein] + nicotinamide + H(+). Mono-ADP-ribosylates chicken skeletal alpha-actin and human non-skeletal beta- and gamma-actin. Mono-ADP-ribosylates 'Arg-177' of yeast actin, blocking its ability to polymerize. Does not possess NAD(+)-glycohydrolase activity, unlike most mART enzymes. Upon expression in S.cerevisiae almost completely inhibits growth. This Photorhabdus laumondii subsp. laumondii (strain DSM 15139 / CIP 105565 / TT01) (Photorhabdus luminescens subsp. laumondii) protein is Photox toxin (phxA).